We begin with the raw amino-acid sequence, 147 residues long: Small ribosomal subunit protein uS5 (147 aa).

In terms of domain architecture, S5 DRBM spans 9 to 72 (FEEVIVDIGR…DDAFKNIVEV (64 aa)).

Belongs to the universal ribosomal protein uS5 family. As to quaternary structure, part of the 30S ribosomal subunit. Contacts proteins S4 and S8.

Its function is as follows. With S4 and S12 plays an important role in translational accuracy. Located at the back of the 30S subunit body where it stabilizes the conformation of the head with respect to the body. This chain is Small ribosomal subunit protein uS5, found in Campylobacter fetus subsp. fetus (strain 82-40).